Here is a 286-residue protein sequence, read N- to C-terminus: Beta-lactamase SHV-2 (286 aa).

Residues 1 to 21 (MRYIRLCIISLLATLPLAVHA) form the signal peptide. S66 functions as the Acyl-ester intermediate in the catalytic mechanism. A disulfide bridge links C73 with C119. Residue E164 is the Proton acceptor of the active site. Position 230 to 232 (230 to 232 (KTG)) interacts with substrate.

Belongs to the class-A beta-lactamase family.

The catalysed reaction is a beta-lactam + H2O = a substituted beta-amino acid. Functionally, this enzyme hydrolyzes cefotaxime, ceftazidime and other broad spectrum cephalosporins. The protein is Beta-lactamase SHV-2 (bla) of Klebsiella pneumoniae.